Consider the following 438-residue polypeptide: Cysteine--tRNA ligase (438 aa).

Cys-28 is a binding site for Zn(2+). Positions 30–40 match the 'HIGH' region motif; that stretch reads PTVYNHLHLGN. Residues Cys-207, His-232, and Glu-236 each contribute to the Zn(2+) site. A 'KMSKS' region motif is present at residues 264 to 268; it reads KMSKS. Lys-267 is an ATP binding site.

The protein belongs to the class-I aminoacyl-tRNA synthetase family. In terms of assembly, monomer. Zn(2+) serves as cofactor.

The protein resides in the cytoplasm. It carries out the reaction tRNA(Cys) + L-cysteine + ATP = L-cysteinyl-tRNA(Cys) + AMP + diphosphate. The sequence is that of Cysteine--tRNA ligase from Aster yellows witches'-broom phytoplasma (strain AYWB).